Here is a 162-residue protein sequence, read N- to C-terminus: Cyclic pyranopterin monophosphate synthase (162 aa).

Substrate is bound by residues 75–77 (LCH) and 113–114 (ME). Residue D128 is part of the active site.

The protein belongs to the MoaC family. Homohexamer; trimer of dimers.

The enzyme catalyses (8S)-3',8-cyclo-7,8-dihydroguanosine 5'-triphosphate = cyclic pyranopterin phosphate + diphosphate. It functions in the pathway cofactor biosynthesis; molybdopterin biosynthesis. In terms of biological role, catalyzes the conversion of (8S)-3',8-cyclo-7,8-dihydroguanosine 5'-triphosphate to cyclic pyranopterin monophosphate (cPMP). The chain is Cyclic pyranopterin monophosphate synthase from Burkholderia ambifaria (strain MC40-6).